A 152-amino-acid chain; its full sequence is MGLSNKFKSFFFLDEEEEYYEEEVAREPEPMQKKTKKEKPSKNRFYAVEEEDAKVVSMQGAQFSSRMVLAEPRVYAEAQELADYLKDYKTVVVNLQRISHDQATRIVDFLSGTVYALGGDIQRVGNNIFLCTPDNVEVNGSISEMLDEQNFM.

The segment covering 23–32 has biased composition (basic and acidic residues); it reads EVAREPEPMQ. Positions 23–42 are disordered; sequence EVAREPEPMQKKTKKEKPSK.

The protein belongs to the SepF family. Homodimer. Interacts with FtsZ.

It is found in the cytoplasm. Functionally, cell division protein that is part of the divisome complex and is recruited early to the Z-ring. Probably stimulates Z-ring formation, perhaps through the cross-linking of FtsZ protofilaments. Its function overlaps with FtsA. In Listeria innocua serovar 6a (strain ATCC BAA-680 / CLIP 11262), this protein is Cell division protein SepF.